A 67-amino-acid chain; its full sequence is Protein AaeX (67 aa).

The next 2 helical transmembrane spans lie at 3-23 (LFPV…ELLL) and 47-67 (PALF…RLFV).

Belongs to the AaeX family.

Its subcellular location is the cell membrane. The protein is Protein AaeX of Escherichia coli O157:H7.